Reading from the N-terminus, the 286-residue chain is Bifunctional protein FolD 2 (286 aa).

NADP(+) is bound by residues 165–167, threonine 192, and valine 233; that span reads GRG.

The protein belongs to the tetrahydrofolate dehydrogenase/cyclohydrolase family. As to quaternary structure, homodimer.

It catalyses the reaction (6R)-5,10-methylene-5,6,7,8-tetrahydrofolate + NADP(+) = (6R)-5,10-methenyltetrahydrofolate + NADPH. It carries out the reaction (6R)-5,10-methenyltetrahydrofolate + H2O = (6R)-10-formyltetrahydrofolate + H(+). Its pathway is one-carbon metabolism; tetrahydrofolate interconversion. In terms of biological role, catalyzes the oxidation of 5,10-methylenetetrahydrofolate to 5,10-methenyltetrahydrofolate and then the hydrolysis of 5,10-methenyltetrahydrofolate to 10-formyltetrahydrofolate. In Rhodococcus jostii (strain RHA1), this protein is Bifunctional protein FolD 2.